The following is a 527-amino-acid chain: Optineurin (527 aa).

2 disordered regions span residues 1-32 (MSHQPLSCLTEKEDSPTESTGNGPPYLAHPNL) and 101-143 (SHEN…KDQL). The stretch at 38 to 170 (EELLQQMKEL…VSELQLKLNS (133 aa)) forms a coiled coil. Residues 58–209 (MKLNNQAMKG…GPTRTVSTSR (152 aa)) are interaction with Rab8. The short motif at 176–181 (DSFVEI) is the LIR element. Serine 177 is subject to Phosphoserine; by TBK1. Over residues 186–197 (GEAEGSVKEIKH) the composition is skewed to basic and acidic residues. 2 disordered regions span residues 186–214 (GEAEGSVKEIKHSPGPTRTVSTSRALSKY) and 262–292 (SDFEKKASNRSEIETQTEGSTEKENDEEKGL). At serine 198 the chain carries Phosphoserine. Residues 201–210 (PTRTVSTSRA) are compositionally biased toward polar residues. The stretch at 239–458 (CLREGNQKVE…LLKENDAFED (220 aa)) forms a coiled coil. Composition is skewed to basic and acidic residues over residues 262–274 (SDFEKKASNRSEI) and 281–292 (STEKENDEEKGL). The tract at residues 361–527 (TRKESEKVDR…LQIHVMDCII (167 aa)) is interaction with HD. The segment at 362-470 (RKESEKVDRA…RQSLMEMQSR (109 aa)) is interaction with MYO6. The UBAN motif lies at 424-429 (DFHAER). Serine 476 carries the post-translational modification Phosphoserine. The segment at 497–527 (QRNIPIHSCPKCGEVLPDIDTLQIHVMDCII) adopts a CCHC NOA-type zinc-finger fold. Residues cysteine 505, cysteine 508, histidine 521, and cysteine 525 each coordinate Zn(2+).

In terms of assembly, self-associates. Interacts with HD. Interacts with GTF3A. Interacts with MYO6. Interacts (via UBAN) with ubiquitinated TFRC. Interacts with GTP-bound Rab8 (RAB8A and/or RAB8B). Interacts with TBC1D17. Interacts with TBK1. Interacts with TRAF3. Binds to linear ubiquitin chains. Interacts with LC3 family members MAP1LC3A, MAP1LC3B, GABARAP, GABARAPL1 and GABARAPL2; OPTN phosphorylation increases the association (at least with MAP1LC3B). Interacts with RAB12; the interaction may be indirect. Interacts with TBK1; this interaction leads to the Golgi localization of TBK1 and its subsequent activation. Interacts with palmitoyltransferase ZDHHC17/HIP14; the interaction does not lead to palmitoylation of OPTN. Interacts with CYLD. Interacts with TOM1; the interaction is indirect and is mediated by MYO6, which acts as a bridge between TOM1 and OPTN. Interacts with USP12; the interaction is independent of USP12 deubiquitinase activity and may be involved in regulation of autophagic flux. Post-translationally, phosphorylated by TBK1, leading to restrict bacterial proliferation in case of infection.

It is found in the cytoplasm. It localises to the perinuclear region. The protein resides in the golgi apparatus. The protein localises to the trans-Golgi network. Its subcellular location is the cytoplasmic vesicle. It is found in the autophagosome. It localises to the recycling endosome. Functionally, plays an important role in the maintenance of the Golgi complex, in membrane trafficking, in exocytosis, through its interaction with myosin VI and Rab8. Links myosin VI to the Golgi complex and plays an important role in Golgi ribbon formation. Negatively regulates the induction of IFNB in response to RNA virus infection. Plays a neuroprotective role in the eye and optic nerve. Probably part of the TNF-alpha signaling pathway that can shift the equilibrium toward induction of cell death. May act by regulating membrane trafficking and cellular morphogenesis via a complex that contains Rab8 and huntingtin (HD). Mediates the interaction of Rab8 with the probable GTPase-activating protein TBC1D17 during Rab8-mediated endocytic trafficking, such as that of transferrin receptor (TFRC/TfR); regulates Rab8 recruitment to tubules emanating from the endocytic recycling compartment. Autophagy receptor that interacts directly with both the cargo to become degraded and an autophagy modifier of the MAP1 LC3 family; targets ubiquitin-coated bacteria (xenophagy) and appears to function in the same pathway as SQSTM1 and CALCOCO2/NDP52. This is Optineurin (OPTN) from Pongo abelii (Sumatran orangutan).